The primary structure comprises 453 residues: Cysteine--tRNA ligase (453 aa).

Residue Cys-30 participates in Zn(2+) binding. The 'HIGH' region signature appears at 32–42 (PTVYDRAHLGN). 3 residues coordinate Zn(2+): Cys-212, His-237, and Glu-241. The 'KMSKS' region motif lies at 268–272 (KMSKS). Lys-271 lines the ATP pocket.

This sequence belongs to the class-I aminoacyl-tRNA synthetase family. In terms of assembly, monomer. It depends on Zn(2+) as a cofactor.

The protein resides in the cytoplasm. It catalyses the reaction tRNA(Cys) + L-cysteine + ATP = L-cysteinyl-tRNA(Cys) + AMP + diphosphate. This Jannaschia sp. (strain CCS1) protein is Cysteine--tRNA ligase.